The sequence spans 57 residues: COP9 signalosome complex subunit 9 (57 aa).

Threonine 26 bears the Phosphothreonine mark.

This sequence belongs to the CSN9 family. As to quaternary structure, component of the CSN complex, composed of COPS1/GPS1, COPS2, COPS3, COPS4, COPS5, COPS6, COPS7 (COPS7A or COPS7B), COPS8 and COPS9. In the complex, it interacts directly with COPS3, COPS5 and COPS6.

The protein localises to the nucleus. Its subcellular location is the cytoplasm. It localises to the nucleoplasm. In terms of biological role, component of the COP9 signalosome complex (CSN), a complex involved in various cellular and developmental processes. The CSN complex is an essential regulator of the ubiquitin (Ubl) conjugation pathway by mediating the deneddylation of the cullin subunits of SCF-type E3 ligase complexes, leading to decrease the Ubl ligase activity of SCF-type complexes such as SCF, CSA or DDB2. The complex is also involved in phosphorylation of p53/TP53, c-jun/JUN, IkappaBalpha/NFKBIA, ITPK1 and IRF8/ICSBP, possibly via its association with CK2 and PKD kinases. CSN-dependent phosphorylation of TP53 and JUN promotes and protects degradation by the Ubl system, respectively. Plays a role in cell proliferation. The chain is COP9 signalosome complex subunit 9 from Mus musculus (Mouse).